The sequence spans 779 residues: Endonuclease MutS2 (779 aa).

Residue 328-335 (GPNTGGKT) participates in ATP binding. One can recognise a Smr domain in the interval 704–779 (LDLRGKRYEE…GSGATIVTLG (76 aa)).

It belongs to the DNA mismatch repair MutS family. MutS2 subfamily. Homodimer. Binds to stalled ribosomes, contacting rRNA.

In terms of biological role, endonuclease that is involved in the suppression of homologous recombination and thus may have a key role in the control of bacterial genetic diversity. Functionally, acts as a ribosome collision sensor, splitting the ribosome into its 2 subunits. Detects stalled/collided 70S ribosomes which it binds and splits by an ATP-hydrolysis driven conformational change. Acts upstream of the ribosome quality control system (RQC), a ribosome-associated complex that mediates the extraction of incompletely synthesized nascent chains from stalled ribosomes and their subsequent degradation. Probably generates substrates for RQC. This Streptococcus pyogenes serotype M1 protein is Endonuclease MutS2.